A 536-amino-acid chain; its full sequence is SNW domain-containing protein 1 (536 aa).

Residues 1 to 46 (MALTSFLPAPTQLSQDQLEAEEKARSQRSRQTSLVSSRREPPPYGY) are disordered. Ala2 carries the post-translational modification N-acetylalanine. Phosphoserine is present on Ser14. A Glycyl lysine isopeptide (Lys-Gly) (interchain with G-Cter in SUMO2) cross-link involves residue Lys23. Positions 59–79 (GDGGAFPEIHVAQYPLDMGRK) are interaction with PPIL1. Glycyl lysine isopeptide (Lys-Gly) (interchain with G-Cter in SUMO2) cross-links involve residues Lys81, Lys97, Lys115, Lys122, Lys141, Lys158, and Lys170. The tract at residues 174–339 (AQYIRYTPSQ…KARERRAGIK (166 aa)) is SNW. Phosphoserine occurs at positions 182 and 190. Lys193 is covalently cross-linked (Glycyl lysine isopeptide (Lys-Gly) (interchain with G-Cter in SUMO2)). A disordered region spans residues 209 to 233 (PPRFKINKKIPRGPPSPPAPVMHSP). Phosphoserine occurs at positions 224, 232, and 234. Residues Lys240, Lys258, Lys286, Lys339, Lys344, Lys416, Lys441, and Lys452 each participate in a glycyl lysine isopeptide (Lys-Gly) (interchain with G-Cter in SUMO2) cross-link. Positions 311–386 (KMAQKEKEKH…RSKLQRNENR (76 aa)) are disordered. Composition is skewed to basic and acidic residues over residues 472-489 (FVPD…RGRE) and 503-530 (KFLE…EHEG). The segment at 472-536 (FVPDKEFSGS…EHEGKKRRKE (65 aa)) is disordered. A phosphoserine mark is found at Ser479 and Ser481. Residue Lys509 forms a Glycyl lysine isopeptide (Lys-Gly) (interchain with G-Cter in SUMO2) linkage.

The protein belongs to the SNW family. In terms of assembly, identified in the spliceosome C complex. Associates with U4/U6-U5 tri-small nuclear ribonucleoproteins (U4/U6-U5 tri-snRNPs). Component of the minor spliceosome, which splices U12-type introns. Interacts with SKI, SMAD2,SMAD3, RBPJ, RB1, PABPN1, MAGEA1, SIRT1, FOXN3, U2AF2, PPIL1, DAXX and ATP1B4. Interacts with VDR and RXRA; preferentially associates with VDR:RXRA heterodimers. Interacts with NCOR2. Interacts with MAML1. Interacts with NOTCH1 NICD; the interaction involves multimerized NOTCH1 NICD. Forms a complex with NOTCH1 NICD and MAML1; the association is dissociated by RBPJ. Associates with positive transcription elongation factor b (P-TEFb). Component of the SNARP complex which consists at least of SNIP1, SNW1, THRAP3, BCLAF1 and PNN.

It localises to the nucleus. In terms of biological role, involved in pre-mRNA splicing as component of the spliceosome. As a component of the minor spliceosome, involved in the splicing of U12-type introns in pre-mRNAs. Required in the specific splicing of CDKN1A pre-mRNA; the function probably involves the recruitment of U2AF2 to the mRNA. May recruit PPIL1 to the spliceosome. May be involved in cyclin-D1/CCND1 mRNA stability through the SNARP complex which associates with both the 3'end of the CCND1 gene and its mRNA. Involved in transcriptional regulation. Modulates TGF-beta-mediated transcription via association with SMAD proteins, MYOD1-mediated transcription via association with PABPN1, RB1-mediated transcriptional repression, and retinoid-X receptor (RXR)- and vitamin D receptor (VDR)-dependent gene transcription in a cell line-specific manner probably involving coactivators NCOA1 and GRIP1. Is involved in NOTCH1-mediated transcriptional activation. Binds to multimerized forms of Notch intracellular domain (NICD) and is proposed to recruit transcriptional coactivators such as MAML1 to form an intermediate preactivation complex which associates with DNA-bound CBF-1/RBPJ to form a transcriptional activation complex by releasing SNW1 and redundant NOTCH1 NICD. This is SNW domain-containing protein 1 (SNW1) from Bos taurus (Bovine).